The primary structure comprises 93 residues: Em protein H5 (93 aa).

The tract at residues 1-93 is disordered; that stretch reads MASGQQERSE…IDESKFKTKS (93 aa). Composition is skewed to basic and acidic residues over residues 7–19, 32–62, and 73–93; these read ERSE…REGE, EAQE…EMGR, and GGER…KTKS.

This sequence belongs to the small hydrophilic plant seed protein family.

In terms of biological role, it is thought to provide protection for the cytoplasm during the desiccation stage of embryo development. The polypeptide is Em protein H5 (EMH5) (Triticum aestivum (Wheat)).